The primary structure comprises 282 residues: Bifunctional protein FolD 2 (282 aa).

NADP(+) is bound by residues 164–166 (GRS) and Ser189.

The protein belongs to the tetrahydrofolate dehydrogenase/cyclohydrolase family. As to quaternary structure, homodimer.

It carries out the reaction (6R)-5,10-methylene-5,6,7,8-tetrahydrofolate + NADP(+) = (6R)-5,10-methenyltetrahydrofolate + NADPH. The catalysed reaction is (6R)-5,10-methenyltetrahydrofolate + H2O = (6R)-10-formyltetrahydrofolate + H(+). The protein operates within one-carbon metabolism; tetrahydrofolate interconversion. In terms of biological role, catalyzes the oxidation of 5,10-methylenetetrahydrofolate to 5,10-methenyltetrahydrofolate and then the hydrolysis of 5,10-methenyltetrahydrofolate to 10-formyltetrahydrofolate. In Lactobacillus johnsonii (strain CNCM I-12250 / La1 / NCC 533), this protein is Bifunctional protein FolD 2.